The primary structure comprises 565 residues: Periplasmic trehalase (565 aa).

Positions 1-30 (MKSPAPSRPQKMALIPACIFLCFAALSVQA) are cleaved as a signal peptide. Substrate is bound by residues Arg152, 159-160 (WD), Asn196, 205-207 (RSQ), 277-279 (RPE), and Gly310. Residues Asp312 and Glu496 each act as proton donor/acceptor in the active site. Glu511 contacts substrate. The segment at 539 to 565 (CDNVPATRPLSESTTQPVKPKEAEPTL) is disordered.

Belongs to the glycosyl hydrolase 37 family. As to quaternary structure, monomer.

The protein resides in the periplasm. It carries out the reaction alpha,alpha-trehalose + H2O = alpha-D-glucose + beta-D-glucose. Provides the cells with the ability to utilize trehalose at high osmolarity by splitting it into glucose molecules that can subsequently be taken up by the phosphotransferase-mediated uptake system. The protein is Periplasmic trehalase of Shigella dysenteriae serotype 1 (strain Sd197).